The primary structure comprises 560 residues: Putative transport protein VSAL_I2029 (560 aa).

Helical transmembrane passes span 14-34 (ILLLFVVLALGLFIAKVKIGS), 37-57 (LGSSIGVLITALFMGSLGYTF), 66-86 (FMLFIFCVGIEAGPNFFGIFL), 94-114 (LLVLVVLISAISLSFLTGYYF), and 161-181 (NLSVGYAFSYLIGLTSLILLA). 2 RCK C-terminal domains span residues 203–292 (RGIG…FRNG) and 293–376 (KEVF…KIGF). 5 helical membrane-spanning segments follow: residues 386-406 (LLAFCSFFILGIMFGMITMSF), 409-429 (VTFGLGNAVGLLISGITLGFL), 451-471 (GLLVFMVGIGLSAGGNIIEYF), 478-498 (VLAAALIVSVIPVILAYLVGA), and 539-559 (AGTYAIANILMTVAGTIMILL).

It belongs to the AAE transporter (TC 2.A.81) family. YbjL subfamily.

It is found in the cell membrane. The protein is Putative transport protein VSAL_I2029 of Aliivibrio salmonicida (strain LFI1238) (Vibrio salmonicida (strain LFI1238)).